A 462-amino-acid polypeptide reads, in one-letter code: MSGGLVTAAYIVAAILFIFSLAGLSKHETSRQGNNFGIAGMAIALIATIFGPDTGNVGWILLAMVIGGAIGIRLAKKVEMTEMPELVAILHSFVGLAAVLVGFNSYLHHDAGMAPILVNIHLTEVFLGIFIGAVTFTGSVVAFGKLCGKISSKPLMLPNRHKMNLAALVVSFLLLIVFVRTDSVGLQVLALLIMTAIALVFGWHLVASIGGADMPVVVSMLNSYSGWAAAAAGFMLSNDLLIVTGALVGSSGAILSYIMCKAMNRSFISVIAGGFGTDGSSTGDDQEVGEHREITAEETAELLKNSHSVIITPGYGMAVAQAQYPVAEITEKLRARGINVRFGIHPVAGRLPGHMNVLLAEAKVPYDIVLEMDEINDDFADTDTVLVIGANDTVNPAAQDDPKSPIAGMPVLEVWKAQNVIVFKRSMNTGYAGVQNPLFFKENTHMLFGDAKASVDAILKAL.

Topologically, residues 1-3 (MSG) are periplasmic. Residues 4 to 24 (GLVTAAYIVAAILFIFSLAGL) form a helical membrane-spanning segment. Residues 25–45 (SKHETSRQGNNFGIAGMAIAL) lie on the Cytoplasmic side of the membrane. Residues 46–66 (IATIFGPDTGNVGWILLAMVI) traverse the membrane as a helical segment. Residues 67 to 82 (GGAIGIRLAKKVEMTE) lie on the Periplasmic side of the membrane. The chain crosses the membrane as a helical span at residues 83–103 (MPELVAILHSFVGLAAVLVGF). Topologically, residues 104-115 (NSYLHHDAGMAP) are cytoplasmic. A helical transmembrane segment spans residues 116–136 (ILVNIHLTEVFLGIFIGAVTF). Topologically, residues 137–164 (TGSVVAFGKLCGKISSKPLMLPNRHKMN) are periplasmic. The helical transmembrane segment at 165–185 (LAALVVSFLLLIVFVRTDSVG) threads the bilayer. Topologically, residues 186–188 (LQV) are cytoplasmic. Residues 189 to 209 (LALLIMTAIALVFGWHLVASI) form a helical membrane-spanning segment. The Periplasmic portion of the chain corresponds to 210 to 215 (GGADMP). A helical transmembrane segment spans residues 216 to 236 (VVVSMLNSYSGWAAAAAGFML). At 237-239 (SND) the chain is on the cytoplasmic side. A helical membrane pass occupies residues 240 to 260 (LLIVTGALVGSSGAILSYIMC). Over 261-308 (KAMNRSFISVIAGGFGTDGSSTGDDQEVGEHREITAEETAELLKNSHS) the chain is Periplasmic. Residues 309 to 329 (VIITPGYGMAVAQAQYPVAEI) form a helical membrane-spanning segment. At 330–462 (TEKLRARGIN…ASVDAILKAL (133 aa)) the chain is on the cytoplasmic side.

The protein belongs to the PNT beta subunit family. Heterodimer of an alpha and a beta chain.

Its subcellular location is the cell inner membrane. The enzyme catalyses NAD(+) + NADPH + H(+)(in) = NADH + NADP(+) + H(+)(out). The transhydrogenation between NADH and NADP is coupled to respiration and ATP hydrolysis and functions as a proton pump across the membrane. The chain is NAD(P) transhydrogenase subunit beta (pntB) from Escherichia coli O157:H7.